The primary structure comprises 524 residues: Solute carrier family 35 member F5 (524 aa).

Positions 1 to 22 (MVPPRHHPGAGRPGALSSSPPF) are disordered. Over residues 13–22 (PGALSSSPPF) the composition is skewed to low complexity. Transmembrane regions (helical) follow at residues 69 to 89 (MALG…SSEL) and 101 to 121 (FFST…FIVW). Residue S207 is modified to Phosphoserine. Helical transmembrane passes span 244–264 (ISFF…EALS), 269–289 (AIVN…AAMF), 297–317 (FTLS…LVNL), 328–348 (TIGS…IVMI), 362–382 (MFFG…FFLL), 396–416 (VVLM…EFLW), 421–441 (FLTS…LSII), and 453–473 (WLFF…TLLC). The EamA domain occupies 253–317 (FLANFSYQEA…SIGGVVLVNL (65 aa)).

This sequence belongs to the SLC35F solute transporter family.

Its subcellular location is the membrane. Putative solute transporter. The polypeptide is Solute carrier family 35 member F5 (SLC35F5) (Bos taurus (Bovine)).